Here is a 92-residue protein sequence, read N- to C-terminus: Small ribosomal subunit protein uS19c (92 aa).

This sequence belongs to the universal ribosomal protein uS19 family.

Its subcellular location is the plastid. The protein localises to the chloroplast. Protein S19 forms a complex with S13 that binds strongly to the 16S ribosomal RNA. The sequence is that of Small ribosomal subunit protein uS19c from Psilotum nudum (Whisk fern).